The following is a 392-amino-acid chain: Imidazolonepropionase (392 aa).

Positions 69 and 71 each coordinate Fe(3+). Residues His69 and His71 each contribute to the Zn(2+) site. The 4-imidazolone-5-propanoate site is built by Arg78, Tyr136, and His163. Tyr136 provides a ligand contact to N-formimidoyl-L-glutamate. Position 226 (His226) interacts with Fe(3+). His226 contributes to the Zn(2+) binding site. A 4-imidazolone-5-propanoate-binding site is contributed by Gln229. Asp302 is a binding site for Fe(3+). Asp302 contributes to the Zn(2+) binding site. Residues Asn304 and Gly306 each contribute to the N-formimidoyl-L-glutamate site. Ser307 serves as a coordination point for 4-imidazolone-5-propanoate.

This sequence belongs to the metallo-dependent hydrolases superfamily. HutI family. Zn(2+) serves as cofactor. It depends on Fe(3+) as a cofactor.

The protein localises to the cytoplasm. The enzyme catalyses 4-imidazolone-5-propanoate + H2O = N-formimidoyl-L-glutamate. The protein operates within amino-acid degradation; L-histidine degradation into L-glutamate; N-formimidoyl-L-glutamate from L-histidine: step 3/3. Catalyzes the hydrolytic cleavage of the carbon-nitrogen bond in imidazolone-5-propanoate to yield N-formimidoyl-L-glutamate. It is the third step in the universal histidine degradation pathway. This chain is Imidazolonepropionase, found in Salinispora arenicola (strain CNS-205).